The primary structure comprises 79 residues: Protein RALF-like 35 (79 aa).

A signal peptide spans 1 to 29 (MAAHKMSLTSLFFVSIVIVLSLFSGFGEG). Disulfide bonds link C45–C52 and C66–C72. N68 carries an N-linked (GlcNAc...) asparagine glycan.

This sequence belongs to the plant rapid alkalinization factor (RALF) family.

It localises to the secreted. Functionally, cell signaling peptide that may regulate plant stress, growth, and development. Mediates a rapid alkalinization of extracellular space by mediating a transient increase in the cytoplasmic Ca(2+) concentration leading to a calcium-dependent signaling events through a cell surface receptor and a concomitant activation of some intracellular mitogen-activated protein kinases. In Arabidopsis thaliana (Mouse-ear cress), this protein is Protein RALF-like 35.